Consider the following 97-residue polypeptide: Mapk-regulated corepressor-interacting protein 1 (97 aa).

The disordered stretch occupies residues 1-30; it reads MTSSPVSRVVYNGKRTSSPRSPPSSSEIFT. Serine 21 and serine 24 each carry phosphoserine. Position 30 is a phosphothreonine (threonine 30). At tyrosine 41 the chain carries Phosphotyrosine. The residue at position 79 (lysine 79) is an N6-acetyllysine. Positions 80–84 match the PXDLS motif motif; sequence PIDLS.

The protein belongs to the MCRIP family. Interacts (unphosphorylated form, via the PXDLS motif) with CTBP1, competitively inhibiting CTBP-ZEB1 interaction. Interacts with CTBP2. Interacts with MCRIP2. Interacts with DDX6. Phosphorylation by MAPK3/1 (ERK1/2) regulates MCRIP1 binding to CTBP(s).

The protein localises to the nucleus. It is found in the cytoplasm. It localises to the stress granule. The phosphorylation status of MCRIP1 functions as a molecular switch to regulate epithelial-mesenchymal transition. Unphosphorylated MCRIP1 binds to and inhibits the transcriptional corepressor CTBP(s). When phosphorylated by MAPK/ERK, MCRIP1 releases CTBP(s) resulting in transcriptional silencing of the E-cadherin gene and induction of epithelial-mesenchymal transition. The chain is Mapk-regulated corepressor-interacting protein 1 from Homo sapiens (Human).